The chain runs to 471 residues: Adenosylhomocysteinase (471 aa).

Residues Thr-60, Asp-135, and Glu-196 each coordinate substrate. Residue 197-199 participates in NAD(+) binding; it reads TTT. 2 residues coordinate substrate: Lys-226 and Asp-230. NAD(+)-binding positions include Asn-231, 260–265, Glu-283, Asn-318, 339–341, and Asn-387; these read GYGDVG and IGH.

Belongs to the adenosylhomocysteinase family. NAD(+) serves as cofactor.

It is found in the cytoplasm. The catalysed reaction is S-adenosyl-L-homocysteine + H2O = L-homocysteine + adenosine. Its pathway is amino-acid biosynthesis; L-homocysteine biosynthesis; L-homocysteine from S-adenosyl-L-homocysteine: step 1/1. In terms of biological role, may play a key role in the regulation of the intracellular concentration of adenosylhomocysteine. This is Adenosylhomocysteinase from Chlorobaculum tepidum (strain ATCC 49652 / DSM 12025 / NBRC 103806 / TLS) (Chlorobium tepidum).